A 426-amino-acid chain; its full sequence is Trophoblast glycoprotein (426 aa).

An N-terminal signal peptide occupies residues 1 to 31 (MPGAGSRGPSAGDGRLRLARLALVLLGWVSA). Over 32-361 (SAPSSSLPSS…ATLPQSLQTS (330 aa)) the chain is Extracellular. Positions 34–51 (PSSSLPSSSTSPAAFLAS) are enriched in low complexity. The tract at residues 34 to 54 (PSSSLPSSSTSPAAFLASGSA) is disordered. The 39-residue stretch at 53 to 91 (SAQPPPAERCPAACECSEAARTVKCVNRNLLEVPADLPP) folds into the LRRNT domain. Disulfide bonds link Cys62–Cys68 and Cys66–Cys77. LRR repeat units lie at residues 92–113 (YVRN…AFAR), 116–139 (PLAD…GAFE), and 141–163 (LPGL…FTFA). Asn124 is a glycosylation site (N-linked (GlcNAc...) asparagine). Residue Asn166 is glycosylated (N-linked (GlcNAc...) asparagine). 4 LRR repeats span residues 172-210 (PSPL…AALR), 215-238 (LRGL…LLDQ), 239-261 (LPSL…ASFR), and 262-281 (NLTH…VLHN). Asn281 carries N-linked (GlcNAc...) asparagine glycosylation. The LRRCT domain maps to 289–352 (GLAHVRVFLD…LTSSDLDCDA (64 aa)). Intrachain disulfides connect Cys304-Cys329 and Cys306-Cys350. Residues 362–382 (YVFLGIVLALIGAIFLLVLYL) traverse the membrane as a helical segment. Residues 383–426 (NRKGIKKWMHNIRDACRDHMEGYHYRYEINADPRLTNLSSNSDV) are Cytoplasmic-facing. Residue Ser424 is modified to Phosphoserine.

Post-translationally, highly glycosylated.

It is found in the cell membrane. Functionally, may function as an inhibitor of Wnt/beta-catenin signaling by indirectly interacting with LRP6 and blocking Wnt3a-dependent LRP6 internalization. The chain is Trophoblast glycoprotein (Tpbg) from Rattus norvegicus (Rat).